A 78-amino-acid polypeptide reads, in one-letter code: Acyl carrier protein (78 aa).

A Carrier domain is found at Ser2–Ala77. At Ser37 the chain carries O-(pantetheine 4'-phosphoryl)serine.

This sequence belongs to the acyl carrier protein (ACP) family. Post-translationally, 4'-phosphopantetheine is transferred from CoA to a specific serine of apo-ACP by AcpS. This modification is essential for activity because fatty acids are bound in thioester linkage to the sulfhydryl of the prosthetic group.

Its subcellular location is the cytoplasm. Its pathway is lipid metabolism; fatty acid biosynthesis. In terms of biological role, carrier of the growing fatty acid chain in fatty acid biosynthesis. In Bacteroides thetaiotaomicron (strain ATCC 29148 / DSM 2079 / JCM 5827 / CCUG 10774 / NCTC 10582 / VPI-5482 / E50), this protein is Acyl carrier protein.